The primary structure comprises 422 residues: UDP-N-acetylglucosamine 1-carboxyvinyltransferase (422 aa).

Residue 22-23 coordinates phosphoenolpyruvate; the sequence is KN. R95 contributes to the UDP-N-acetyl-alpha-D-glucosamine binding site. Catalysis depends on C119, which acts as the Proton donor. Residue C119 is modified to 2-(S-cysteinyl)pyruvic acid O-phosphothioketal. Residues 124-128, D309, and V331 each bind UDP-N-acetyl-alpha-D-glucosamine; that span reads RPIDQ.

It belongs to the EPSP synthase family. MurA subfamily.

It localises to the cytoplasm. The enzyme catalyses phosphoenolpyruvate + UDP-N-acetyl-alpha-D-glucosamine = UDP-N-acetyl-3-O-(1-carboxyvinyl)-alpha-D-glucosamine + phosphate. The protein operates within cell wall biogenesis; peptidoglycan biosynthesis. In terms of biological role, cell wall formation. Adds enolpyruvyl to UDP-N-acetylglucosamine. In Anaeromyxobacter dehalogenans (strain 2CP-1 / ATCC BAA-258), this protein is UDP-N-acetylglucosamine 1-carboxyvinyltransferase.